A 373-amino-acid polypeptide reads, in one-letter code: Chaperone protein DnaJ (373 aa).

The region spanning 4 to 69 (DYYETLSVER…SKRRIYDTYG (66 aa)) is the J domain. The CR-type zinc finger occupies 131-209 (GVSKEVKLSR…CHGEGLVKKT (79 aa)). Cys144, Cys147, Cys161, Cys164, Cys183, Cys186, Cys197, and Cys200 together coordinate Zn(2+). CXXCXGXG motif repeat units follow at residues 144 to 151 (CWTCEGTG), 161 to 168 (CPTCNGRG), 183 to 190 (CPECEGEG), and 197 to 204 (CNDCHGEG).

The protein belongs to the DnaJ family. In terms of assembly, homodimer. Zn(2+) is required as a cofactor.

It is found in the cytoplasm. In terms of biological role, participates actively in the response to hyperosmotic and heat shock by preventing the aggregation of stress-denatured proteins and by disaggregating proteins, also in an autonomous, DnaK-independent fashion. Unfolded proteins bind initially to DnaJ; upon interaction with the DnaJ-bound protein, DnaK hydrolyzes its bound ATP, resulting in the formation of a stable complex. GrpE releases ADP from DnaK; ATP binding to DnaK triggers the release of the substrate protein, thus completing the reaction cycle. Several rounds of ATP-dependent interactions between DnaJ, DnaK and GrpE are required for fully efficient folding. Also involved, together with DnaK and GrpE, in the DNA replication of plasmids through activation of initiation proteins. The sequence is that of Chaperone protein DnaJ from Desulfotalea psychrophila (strain LSv54 / DSM 12343).